Consider the following 606-residue polypeptide: NADH-ubiquinone oxidoreductase chain 5 (606 aa).

The next 16 membrane-spanning stretches (helical) occupy residues Met-1–Met-21, Tyr-35–Leu-55, Leu-87–Tyr-107, Ile-114–Ala-134, Leu-140–Gly-160, Ala-171–Ser-191, Phe-211–Leu-233, Thr-241–Val-261, Leu-272–Ala-292, Ile-301–Asn-320, Ala-325–Ile-347, Leu-366–Leu-386, Leu-413–Gly-433, Leu-457–Thr-477, Met-482–Phe-502, and Gly-582–Phe-602.

The protein belongs to the complex I subunit 5 family. As to quaternary structure, core subunit of respiratory chain NADH dehydrogenase (Complex I) which is composed of 45 different subunits.

The protein localises to the mitochondrion inner membrane. The enzyme catalyses a ubiquinone + NADH + 5 H(+)(in) = a ubiquinol + NAD(+) + 4 H(+)(out). Its function is as follows. Core subunit of the mitochondrial membrane respiratory chain NADH dehydrogenase (Complex I) which catalyzes electron transfer from NADH through the respiratory chain, using ubiquinone as an electron acceptor. Essential for the catalytic activity and assembly of complex I. The protein is NADH-ubiquinone oxidoreductase chain 5 (MT-ND5) of Balaenoptera physalus (Fin whale).